Here is a 495-residue protein sequence, read N- to C-terminus: 3-octaprenyl-4-hydroxybenzoate carboxy-lyase (495 aa).

Asparagine 171 contributes to the Mn(2+) binding site. Residues 174–176 (IYR), 188–190 (RWL), and 193–194 (RG) contribute to the prenylated FMN site. Glutamate 237 is a Mn(2+) binding site. Aspartate 286 acts as the Proton donor in catalysis.

It belongs to the UbiD family. As to quaternary structure, homohexamer. The cofactor is prenylated FMN. Requires Mn(2+) as cofactor.

Its subcellular location is the cell membrane. It carries out the reaction a 4-hydroxy-3-(all-trans-polyprenyl)benzoate + H(+) = a 2-(all-trans-polyprenyl)phenol + CO2. The protein operates within cofactor biosynthesis; ubiquinone biosynthesis. In terms of biological role, catalyzes the decarboxylation of 3-octaprenyl-4-hydroxy benzoate to 2-octaprenylphenol, an intermediate step in ubiquinone biosynthesis. This chain is 3-octaprenyl-4-hydroxybenzoate carboxy-lyase, found in Hamiltonella defensa subsp. Acyrthosiphon pisum (strain 5AT).